The following is a 471-amino-acid chain: Meiosis-specific with OB domain-containing protein (471 aa).

Residues 167–272 (IINVLAAVKS…EANILLNFIR (106 aa)) constitute a DNA-binding region (OB).

It belongs to the MEIOB family. Component of a multiprotein complex with RPA2 and SPATA22. Interacts with SPATA22. Interacts with the complex BRME1:HSF2BP:BRCA2.

The protein localises to the cytoplasm. It localises to the nucleus. The protein resides in the chromosome. Single-stranded DNA-binding protein required for homologous recombination in meiosis I. Required for double strand breaks (DSBs) repair and crossover formation and promotion of faithful and complete synapsis. Not required for the initial loading of recombinases but required to maintain a proper number of RAD51 and DMC1 foci after the zygotene stage. May act by ensuring the stabilization of recombinases, which is required for successful homology search and meiotic recombination. Displays Single-stranded DNA 3'-5' exonuclease activity in vitro. The polypeptide is Meiosis-specific with OB domain-containing protein (MEIOB) (Macaca fascicularis (Crab-eating macaque)).